The sequence spans 122 residues: Small ribosomal subunit protein uS12 (122 aa).

At aspartate 89 the chain carries 3-methylthioaspartic acid.

The protein belongs to the universal ribosomal protein uS12 family. Part of the 30S ribosomal subunit. Contacts proteins S8 and S17. May interact with IF1 in the 30S initiation complex.

With S4 and S5 plays an important role in translational accuracy. Its function is as follows. Interacts with and stabilizes bases of the 16S rRNA that are involved in tRNA selection in the A site and with the mRNA backbone. Located at the interface of the 30S and 50S subunits, it traverses the body of the 30S subunit contacting proteins on the other side and probably holding the rRNA structure together. The combined cluster of proteins S8, S12 and S17 appears to hold together the shoulder and platform of the 30S subunit. The protein is Small ribosomal subunit protein uS12 of Corynebacterium glutamicum (strain R).